We begin with the raw amino-acid sequence, 186 residues long: UPF0340 protein SZO_02480 (186 aa).

This sequence belongs to the UPF0340 family.

This is UPF0340 protein SZO_02480 from Streptococcus equi subsp. zooepidemicus (strain H70).